The primary structure comprises 96 residues: NADH-quinone oxidoreductase subunit K (96 aa).

The next 3 helical transmembrane spans lie at 1 to 21 (MNYI…VLVR), 25 to 45 (IIVF…FVAF), and 56 to 76 (VIAF…LAII).

It belongs to the complex I subunit 4L family. In terms of assembly, NDH-1 is composed of 14 different subunits. Subunits NuoA, H, J, K, L, M, N constitute the membrane sector of the complex.

It localises to the cell membrane. The catalysed reaction is a quinone + NADH + 5 H(+)(in) = a quinol + NAD(+) + 4 H(+)(out). Functionally, NDH-1 shuttles electrons from NADH, via FMN and iron-sulfur (Fe-S) centers, to quinones in the respiratory chain. The immediate electron acceptor for the enzyme in this species is believed to be a menaquinone. Couples the redox reaction to proton translocation (for every two electrons transferred, four hydrogen ions are translocated across the cytoplasmic membrane), and thus conserves the redox energy in a proton gradient. This Thermobifida fusca (strain YX) protein is NADH-quinone oxidoreductase subunit K.